We begin with the raw amino-acid sequence, 58 residues long: Potassium channel toxin alpha-KTx BmKcug1a (58 aa).

The first 21 residues, 1–21 (MKISFLLLLAIVICSIGWTEA), serve as a signal peptide directing secretion. Glutamine 22 is subject to Pyrrolidone carboxylic acid. 3 disulfides stabilise this stretch: cysteine 28–cysteine 49, cysteine 34–cysteine 54, and cysteine 38–cysteine 56.

The protein belongs to the short scorpion toxin superfamily. Potassium channel inhibitor family. Alpha-KTx 01 subfamily. In terms of tissue distribution, expressed by the venom gland.

The protein localises to the secreted. In terms of biological role, potent blocker of both large-conductance calcium-activated potassium channels (KCa1.1/KCNMA1) and voltage-gated potassium channels (Kv1.3/KCNA3 and ERG1/Kv11.1/KCNH2). This Olivierus martensii (Manchurian scorpion) protein is Potassium channel toxin alpha-KTx BmKcug1a.